The primary structure comprises 529 residues: UDP-glucuronosyltransferase 2B11 (529 aa).

The N-terminal stretch at 1-21 is a signal peptide; the sequence is MTLKWTSVLLLIHLSCYFSSG. An N6-succinyllysine modification is found at Lys135. Asn315 is a glycosylation site (N-linked (GlcNAc...) asparagine). The helical transmembrane segment at 493–513 threads the bilayer; sequence VIGFLLACVATVIFIITKFCL.

Belongs to the UDP-glycosyltransferase family. As to expression, widely expressed.

It is found in the microsome membrane. It localises to the endoplasmic reticulum membrane. The catalysed reaction is glucuronate acceptor + UDP-alpha-D-glucuronate = acceptor beta-D-glucuronoside + UDP + H(+). In terms of biological role, UDPGT is of major importance in the conjugation and subsequent elimination of potentially toxic xenobiotics and endogenous compounds. The protein is UDP-glucuronosyltransferase 2B11 (UGT2B11) of Homo sapiens (Human).